The following is a 546-amino-acid chain: Hexose transporter HXT10 (546 aa).

The Cytoplasmic portion of the chain corresponds to 1–44 (MVSSSVSILGTSAKASTSLSRKDEIKLTPETREASLDIPYKPII). A helical transmembrane segment spans residues 45–65 (AYWTVMGLCLMIAFGGFIFGW). Over 66 to 100 (DTGTISGFINQTDFKRRFGELQRDGSFQLSDVRTG) the chain is Extracellular. Asn-75 carries N-linked (GlcNAc...) asparagine glycosylation. A helical membrane pass occupies residues 101–121 (LIVGIFNIGCALGGLTLGRLG). At 122–127 (DIYGRK) the chain is on the cytoplasmic side. A helical membrane pass occupies residues 128–148 (IGLMCVILVYVVGIVIQIASS). At 149 to 158 (DKWYQYFIGR) the chain is on the extracellular side. A helical transmembrane segment spans residues 159–179 (IVSGMGVGGVAVLSPTLISEI). The Cytoplasmic portion of the chain corresponds to 180–185 (SPKHLR). Residues 186 to 206 (GTCVSFYQLMITLGIFLGYCT) form a helical membrane-spanning segment. Topologically, residues 207-220 (NYGTKKYSNSIQWR) are extracellular. A helical transmembrane segment spans residues 221-241 (VPLGLCFAWAIFMVIGMVMVP). Residues 242–324 (ESPRYLVEKG…IQSLQQLTGC (83 aa)) lie on the Cytoplasmic side of the membrane. A helical transmembrane segment spans residues 325–341 (NYFFYYGTTIFNAVGMQ). The Extracellular portion of the chain corresponds to 342–347 (DSFETS). The helical transmembrane segment at 348 to 365 (IVLGAVNFASTFVALYIV) threads the bilayer. Residues 366–372 (DKFGRRK) lie on the Cytoplasmic side of the membrane. The chain crosses the membrane as a helical span at residues 373–393 (CLLWGSASMAICFVIFATVGV). The Extracellular segment spans residues 394-415 (TRLWPQGKDQPSSQSAGNVMIV). A helical transmembrane segment spans residues 416 to 436 (FTCFFIFSFAITWAPIAYVIV). Over 437 to 453 (AETYPLRVKNRAMAIAV) the chain is Cytoplasmic. The chain crosses the membrane as a helical span at residues 454 to 474 (GANWMWGFLIGFFTPFITRSI). A topological domain (extracellular) is located at residue Gly-475. The helical transmembrane segment at 476–496 (FSYGYVFMGCLIFSYFYVFFF) threads the bilayer. The Cytoplasmic portion of the chain corresponds to 497 to 546 (VCETKGLTLEEVNEMYEERIKPWKSGGWIPSSRRTPQPTSSTPLVIVDSK).

It belongs to the major facilitator superfamily. Sugar transporter (TC 2.A.1.1) family.

It is found in the membrane. Its function is as follows. Probable glucose transporter. This is Hexose transporter HXT10 (HXT10) from Saccharomyces cerevisiae (strain ATCC 204508 / S288c) (Baker's yeast).